Reading from the N-terminus, the 405-residue chain is S-adenosylmethionine synthase (405 aa).

141-146 (GQGSVD) provides a ligand contact to ATP.

It belongs to the AdoMet synthase 2 family. Requires Mg(2+) as cofactor.

It carries out the reaction L-methionine + ATP + H2O = S-adenosyl-L-methionine + phosphate + diphosphate. The protein operates within amino-acid biosynthesis; S-adenosyl-L-methionine biosynthesis; S-adenosyl-L-methionine from L-methionine: step 1/1. Functionally, catalyzes the formation of S-adenosylmethionine from methionine and ATP. In Methanococcus maripaludis (strain C5 / ATCC BAA-1333), this protein is S-adenosylmethionine synthase.